Here is a 142-residue protein sequence, read N- to C-terminus: Large ribosomal subunit protein uL11 (142 aa).

This sequence belongs to the universal ribosomal protein uL11 family. Part of the ribosomal stalk of the 50S ribosomal subunit. Interacts with L10 and the large rRNA to form the base of the stalk. L10 forms an elongated spine to which L12 dimers bind in a sequential fashion forming a multimeric L10(L12)X complex. In terms of processing, one or more lysine residues are methylated.

Its function is as follows. Forms part of the ribosomal stalk which helps the ribosome interact with GTP-bound translation factors. The sequence is that of Large ribosomal subunit protein uL11 from Idiomarina loihiensis (strain ATCC BAA-735 / DSM 15497 / L2-TR).